Reading from the N-terminus, the 481-residue chain is Cysteine--tRNA ligase (481 aa).

Cys29 lines the Zn(2+) pocket. The short motif at 31 to 41 (VTVYDHCHIGH) is the 'HIGH' region element. The Zn(2+) site is built by Cys209, His234, and Glu238. A 'KMSKS' region motif is present at residues 266 to 270 (KMSKS). Lys269 provides a ligand contact to ATP.

Belongs to the class-I aminoacyl-tRNA synthetase family. As to quaternary structure, monomer. Zn(2+) is required as a cofactor.

It localises to the cytoplasm. It catalyses the reaction tRNA(Cys) + L-cysteine + ATP = L-cysteinyl-tRNA(Cys) + AMP + diphosphate. In Geobacter sulfurreducens (strain ATCC 51573 / DSM 12127 / PCA), this protein is Cysteine--tRNA ligase.